We begin with the raw amino-acid sequence, 254 residues long: 3-dehydroquinate dehydratase (254 aa).

3-dehydroquinate-binding positions include 47 to 49 (EFR) and arginine 83. The active-site Proton donor/acceptor is the histidine 144. Catalysis depends on lysine 171, which acts as the Schiff-base intermediate with substrate. The 3-dehydroquinate site is built by arginine 213, serine 232, and glutamine 236.

The protein belongs to the type-I 3-dehydroquinase family. As to quaternary structure, homodimer.

It catalyses the reaction 3-dehydroquinate = 3-dehydroshikimate + H2O. It participates in metabolic intermediate biosynthesis; chorismate biosynthesis; chorismate from D-erythrose 4-phosphate and phosphoenolpyruvate: step 3/7. In terms of biological role, involved in the third step of the chorismate pathway, which leads to the biosynthesis of aromatic amino acids. Catalyzes the cis-dehydration of 3-dehydroquinate (DHQ) and introduces the first double bond of the aromatic ring to yield 3-dehydroshikimate. The protein is 3-dehydroquinate dehydratase of Neisseria meningitidis serogroup A / serotype 4A (strain DSM 15465 / Z2491).